A 177-amino-acid polypeptide reads, in one-letter code: Large ribosomal subunit protein uL6 (177 aa).

The protein belongs to the universal ribosomal protein uL6 family. In terms of assembly, part of the 50S ribosomal subunit.

In terms of biological role, this protein binds to the 23S rRNA, and is important in its secondary structure. It is located near the subunit interface in the base of the L7/L12 stalk, and near the tRNA binding site of the peptidyltransferase center. In Albidiferax ferrireducens (strain ATCC BAA-621 / DSM 15236 / T118) (Rhodoferax ferrireducens), this protein is Large ribosomal subunit protein uL6.